Consider the following 380-residue polypeptide: Queuine tRNA-ribosyltransferase (380 aa).

Asp-96 serves as the catalytic Proton acceptor. Substrate-binding positions include 96-100, Asp-150, Gln-193, and Gly-220; that span reads DSGGF. The RNA binding stretch occupies residues 251-257; that stretch reads GVGAPDS. Asp-270 (nucleophile) is an active-site residue. An RNA binding; important for wobble base 34 recognition region spans residues 275–279; it reads TRIAR. Positions 308, 310, 313, and 339 each coordinate Zn(2+).

The protein belongs to the queuine tRNA-ribosyltransferase family. As to quaternary structure, homodimer. Within each dimer, one monomer is responsible for RNA recognition and catalysis, while the other monomer binds to the replacement base PreQ1. Zn(2+) is required as a cofactor.

It catalyses the reaction 7-aminomethyl-7-carbaguanine + guanosine(34) in tRNA = 7-aminomethyl-7-carbaguanosine(34) in tRNA + guanine. It functions in the pathway tRNA modification; tRNA-queuosine biosynthesis. Its function is as follows. Catalyzes the base-exchange of a guanine (G) residue with the queuine precursor 7-aminomethyl-7-deazaguanine (PreQ1) at position 34 (anticodon wobble position) in tRNAs with GU(N) anticodons (tRNA-Asp, -Asn, -His and -Tyr). Catalysis occurs through a double-displacement mechanism. The nucleophile active site attacks the C1' of nucleotide 34 to detach the guanine base from the RNA, forming a covalent enzyme-RNA intermediate. The proton acceptor active site deprotonates the incoming PreQ1, allowing a nucleophilic attack on the C1' of the ribose to form the product. After dissociation, two additional enzymatic reactions on the tRNA convert PreQ1 to queuine (Q), resulting in the hypermodified nucleoside queuosine (7-(((4,5-cis-dihydroxy-2-cyclopenten-1-yl)amino)methyl)-7-deazaguanosine). This is Queuine tRNA-ribosyltransferase from Streptococcus pyogenes serotype M6 (strain ATCC BAA-946 / MGAS10394).